Consider the following 252-residue polypeptide: Auxin-induced in root cultures protein 12 (252 aa).

The signal sequence occupies residues 1 to 25 (MASSSSSLLILAVACFVSLISPAIS). Residues 49-165 (LNSYLHYTYN…DSVNQVWQIG (117 aa)) form the DOMON domain. Residues Asn-58 and Asn-61 are each glycosylated (N-linked (GlcNAc...) asparagine). Met-91 serves as a coordination point for heme. N-linked (GlcNAc...) asparagine glycosylation is found at Asn-114 and Asn-167. His-176 contributes to the heme binding site. The interval 193–224 (EDAAPGSAPSPGSAPAPGTSGSTTPGTAAGGP) is disordered. A compositionally biased stretch (low complexity) spans 195–219 (AAPGSAPSPGSAPAPGTSGSTTPGT). Asn-226 carries the GPI-anchor amidated asparagine lipid modification. Positions 227–252 (AGSLTRNVNFGVNLGILVLLGSIFIF) are cleaved as a propeptide — removed in mature form.

Heme is required as a cofactor.

The protein resides in the cell membrane. One-heme-containing cytochrome. This chain is Auxin-induced in root cultures protein 12 (AIR12), found in Arabidopsis thaliana (Mouse-ear cress).